The sequence spans 327 residues: GMP reductase (327 aa).

Cysteine 175 serves as the catalytic Thioimidate intermediate. An NADP(+)-binding site is contributed by 204 to 227; that stretch reads IIADGGIRTHGDVAKSIRFGATMV.

The protein belongs to the IMPDH/GMPR family. GuaC type 2 subfamily.

It catalyses the reaction IMP + NH4(+) + NADP(+) = GMP + NADPH + 2 H(+). Functionally, catalyzes the irreversible NADPH-dependent deamination of GMP to IMP. It functions in the conversion of nucleobase, nucleoside and nucleotide derivatives of G to A nucleotides, and in maintaining the intracellular balance of A and G nucleotides. The sequence is that of GMP reductase from Bacillus cereus (strain ATCC 10987 / NRS 248).